Consider the following 147-residue polypeptide: Hemoglobin subunit beta (147 aa).

Serine 2 is modified (N-acetylserine). The 145-residue stretch at 3–147 (FLSAEEKNLV…VASALAHRYH (145 aa)) folds into the Globin domain. Serine 45 is modified (phosphoserine). Lysine 60 bears the N6-acetyllysine mark. Position 64 (histidine 64) interacts with heme b. Lysine 83 carries the N6-acetyllysine modification. Histidine 93 contributes to the heme b binding site. Cysteine 94 is modified (S-nitrosocysteine).

It belongs to the globin family. As to quaternary structure, heterotetramer of two alpha chains and two beta chains. As to expression, red blood cells.

Its function is as follows. Involved in oxygen transport from the lung to the various peripheral tissues. The chain is Hemoglobin subunit beta (HBB) from Panthera pardus orientalis (Amur leopard).